We begin with the raw amino-acid sequence, 672 residues long: tRNA 5-methylaminomethyl-2-thiouridine biosynthesis bifunctional protein MnmC (672 aa).

The tract at residues Met1 to Ala235 is tRNA (mnm(5)s(2)U34)-methyltransferase. Positions Ile259–Gly672 are FAD-dependent cmnm(5)s(2)U34 oxidoreductase.

The protein in the N-terminal section; belongs to the methyltransferase superfamily. tRNA (mnm(5)s(2)U34)-methyltransferase family. In the C-terminal section; belongs to the DAO family. FAD is required as a cofactor.

The protein resides in the cytoplasm. The catalysed reaction is 5-aminomethyl-2-thiouridine(34) in tRNA + S-adenosyl-L-methionine = 5-methylaminomethyl-2-thiouridine(34) in tRNA + S-adenosyl-L-homocysteine + H(+). Functionally, catalyzes the last two steps in the biosynthesis of 5-methylaminomethyl-2-thiouridine (mnm(5)s(2)U) at the wobble position (U34) in tRNA. Catalyzes the FAD-dependent demodification of cmnm(5)s(2)U34 to nm(5)s(2)U34, followed by the transfer of a methyl group from S-adenosyl-L-methionine to nm(5)s(2)U34, to form mnm(5)s(2)U34. The protein is tRNA 5-methylaminomethyl-2-thiouridine biosynthesis bifunctional protein MnmC of Cupriavidus metallidurans (strain ATCC 43123 / DSM 2839 / NBRC 102507 / CH34) (Ralstonia metallidurans).